Consider the following 142-residue polypeptide: Succinate dehydrogenase assembly factor 2, mitochondrial (142 aa).

Belongs to the SDHAF2 family. In terms of assembly, interacts with the flavoprotein subunit within the SDH catalytic dimer.

The protein resides in the mitochondrion matrix. Its function is as follows. Plays an essential role in the assembly of succinate dehydrogenase (SDH), an enzyme complex (also referred to as respiratory complex II) that is a component of both the tricarboxylic acid (TCA) cycle and the mitochondrial electron transport chain, and which couples the oxidation of succinate to fumarate with the reduction of ubiquinone (coenzyme Q) to ubiquinol. Required for flavinylation (covalent attachment of FAD) of the flavoprotein subunit of the SDH catalytic dimer. The sequence is that of Succinate dehydrogenase assembly factor 2, mitochondrial from Debaryomyces hansenii (strain ATCC 36239 / CBS 767 / BCRC 21394 / JCM 1990 / NBRC 0083 / IGC 2968) (Yeast).